The primary structure comprises 363 residues: Dihydroorotate dehydrogenase (quinone) (363 aa).

Residues 62 to 66 (AGYDK) and threonine 86 each bind FMN. Position 66 (lysine 66) interacts with substrate. 111–115 (NRLGF) contacts substrate. Positions 140 and 171 each coordinate FMN. A substrate-binding site is contributed by asparagine 171. The active-site Nucleophile is the serine 174. Substrate is bound at residue asparagine 176. Residues lysine 216 and serine 244 each coordinate FMN. 245–246 (NT) is a binding site for substrate. Residues glycine 267, glycine 296, and 317–318 (YS) contribute to the FMN site.

It belongs to the dihydroorotate dehydrogenase family. Type 2 subfamily. In terms of assembly, monomer. Requires FMN as cofactor.

The protein localises to the cell membrane. It catalyses the reaction (S)-dihydroorotate + a quinone = orotate + a quinol. It participates in pyrimidine metabolism; UMP biosynthesis via de novo pathway; orotate from (S)-dihydroorotate (quinone route): step 1/1. Functionally, catalyzes the conversion of dihydroorotate to orotate with quinone as electron acceptor. The polypeptide is Dihydroorotate dehydrogenase (quinone) (Allorhizobium ampelinum (strain ATCC BAA-846 / DSM 112012 / S4) (Agrobacterium vitis (strain S4))).